Consider the following 351-residue polypeptide: Ferrochelatase (351 aa).

Fe cation-binding residues include histidine 221 and glutamate 302.

The protein belongs to the ferrochelatase family.

Its subcellular location is the cytoplasm. It carries out the reaction heme b + 2 H(+) = protoporphyrin IX + Fe(2+). It functions in the pathway porphyrin-containing compound metabolism; protoheme biosynthesis; protoheme from protoporphyrin-IX: step 1/1. Catalyzes the ferrous insertion into protoporphyrin IX. In Bradyrhizobium sp. (strain BTAi1 / ATCC BAA-1182), this protein is Ferrochelatase.